Reading from the N-terminus, the 450-residue chain is tRNA modification GTPase MnmE (450 aa).

Residues R23, E80, and R123 each contribute to the (6S)-5-formyl-5,6,7,8-tetrahydrofolate site. One can recognise a TrmE-type G domain in the interval 219–372 (GLHVVLAGQP…LRARLLQMAG (154 aa)). N229 contacts K(+). GTP is bound by residues 229-234 (NVGKSS), 248-254 (TPIAGTT), and 273-276 (DTAG). A Mg(2+)-binding site is contributed by S233. Residues T248, I250, and T253 each contribute to the K(+) site. T254 is a Mg(2+) binding site. K450 is a binding site for (6S)-5-formyl-5,6,7,8-tetrahydrofolate.

It belongs to the TRAFAC class TrmE-Era-EngA-EngB-Septin-like GTPase superfamily. TrmE GTPase family. In terms of assembly, homodimer. Heterotetramer of two MnmE and two MnmG subunits. The cofactor is K(+).

It is found in the cytoplasm. Exhibits a very high intrinsic GTPase hydrolysis rate. Involved in the addition of a carboxymethylaminomethyl (cmnm) group at the wobble position (U34) of certain tRNAs, forming tRNA-cmnm(5)s(2)U34. The sequence is that of tRNA modification GTPase MnmE from Bordetella avium (strain 197N).